Reading from the N-terminus, the 171-residue chain is MALLSSNELRKLIKANPPLLENAVDTETQIQPNGLELTLKEIKTIEGAGAVDFDNSERKVPDAKPLEFGKDGWIHLPEGIYKVIFNEIVNIPMNLAAIAKPRSSLIRCGATLETAVWDAGYRGRSESMLVVYNPAGFKLKKNARIMQLLFYTLNTEVEEGYSGVYQNENTN.

Belongs to the dCTP deaminase family. Archaeal dUTPase subfamily.

It carries out the reaction dUTP + H2O = dUMP + diphosphate + H(+). Its pathway is pyrimidine metabolism; dUMP biosynthesis; dUMP from dCTP (dUTP route): step 2/2. This enzyme is involved in nucleotide metabolism: it produces dUMP, the immediate precursor of thymidine nucleotides and it decreases the intracellular concentration of dUTP so that uracil cannot be incorporated into DNA. This Methanosarcina mazei (strain ATCC BAA-159 / DSM 3647 / Goe1 / Go1 / JCM 11833 / OCM 88) (Methanosarcina frisia) protein is Probable deoxyuridine 5'-triphosphate nucleotidohydrolase.